Here is a 122-residue protein sequence, read N- to C-terminus: Small ribosomal subunit protein uS13 (122 aa).

Residues 97–122 (PVRGQKTKSNARTRKGPRPSRIKKKK) form a disordered region. Residues 101–122 (QKTKSNARTRKGPRPSRIKKKK) are compositionally biased toward basic residues.

Belongs to the universal ribosomal protein uS13 family. In terms of assembly, part of the 30S ribosomal subunit. Forms a loose heterodimer with protein S19. Forms two bridges to the 50S subunit in the 70S ribosome.

Located at the top of the head of the 30S subunit, it contacts several helices of the 16S rRNA. In the 70S ribosome it contacts the 23S rRNA (bridge B1a) and protein L5 of the 50S subunit (bridge B1b), connecting the 2 subunits; these bridges are implicated in subunit movement. Contacts the tRNAs in the A and P-sites. The sequence is that of Small ribosomal subunit protein uS13 from Thermosipho melanesiensis (strain DSM 12029 / CIP 104789 / BI429).